The following is a 333-amino-acid chain: Trans-enoyl reductase apdC (333 aa).

Residue 45–48 (FDAK) coordinates NADP(+). A substrate-binding site is contributed by 131–138 (VGLATVGM). NADP(+) is bound by residues 167–170 (SPHN), Tyr185, and 232–233 (LD). Position 252 to 256 (252 to 256 (SVTMY)) interacts with substrate. Residue 321-322 (VS) coordinates NADP(+).

Belongs to the zinc-containing alcohol dehydrogenase family. In terms of assembly, monomer.

It functions in the pathway secondary metabolite biosynthesis. Its function is as follows. Trans-enoyl reductase; part of the gene cluster that mediates the biosynthesis of aspyridones. The polyketide-amino acid backbone preaspyridone A is first assembled by the PKS-NRPS hybrid apdA. The assembly of preaspyridone A is initiated by loading of malonyl-CoA onto apdA, followed by decarboxylation to yield the acetyl starter unit. The growing polyketide chain then elongates into a tetraketide. The adpA PKS module catalyzes three Claisen condensations, as well as beta-keto processing and methylation. Alpha-methylation step during polyketide synthesis is a prerequisite and a key checkpoint for chain transfer between PKS and NRPS modules. The downstream NRPS module contains the condensation (C), adenylation (A), and thiolation (T) domains and catalyzes the incorporation of tyrosine via the formation of the L-tyrosinyl-thioester and the amide linkage between L-tyrosinyl-thioester and the tetraketide. The bimodular assembly line is terminated with a reductase (R) domain that facilitates formation and release of the tetramic acid product. Because apdA lacks a designated enoylreductase (ER) domain, the required activity is provided the enoyl reductase apdC. ApdC appears to operate with different stereoselectivity in different PKS cycle. Combined with apdC, apdA is proposed to synthesize preaspyridone A via about 20 enzymatic steps. A number of oxidative steps performed successively by the cytochrome P450 monooxygenases apdE and apdB are required for the conversion of preaspyridone A to aspyridone A. The cytochrome P450 monooxygenase apdE is responsible for the oxidative dephenylation of preaspyridone A. Finally, the predicted FAD-dependent monooxygenase apdD and the acyl-CoA dehydrogenase apdG may be involved in the transformation of aspyridone A into aspyridone B. The polypeptide is Trans-enoyl reductase apdC (Emericella nidulans (strain FGSC A4 / ATCC 38163 / CBS 112.46 / NRRL 194 / M139) (Aspergillus nidulans)).